Consider the following 337-residue polypeptide: tRNA N6-adenosine threonylcarbamoyltransferase (337 aa).

Fe cation is bound by residues His-114 and His-118. Substrate contacts are provided by residues 136-140 (LVSGG), Asp-169, Gly-182, Asp-186, and Asn-275. Residue Asp-301 coordinates Fe cation.

It belongs to the KAE1 / TsaD family. Fe(2+) is required as a cofactor.

It is found in the cytoplasm. The enzyme catalyses L-threonylcarbamoyladenylate + adenosine(37) in tRNA = N(6)-L-threonylcarbamoyladenosine(37) in tRNA + AMP + H(+). Functionally, required for the formation of a threonylcarbamoyl group on adenosine at position 37 (t(6)A37) in tRNAs that read codons beginning with adenine. Is involved in the transfer of the threonylcarbamoyl moiety of threonylcarbamoyl-AMP (TC-AMP) to the N6 group of A37, together with TsaE and TsaB. TsaD likely plays a direct catalytic role in this reaction. The polypeptide is tRNA N6-adenosine threonylcarbamoyltransferase (Streptococcus uberis (strain ATCC BAA-854 / 0140J)).